Reading from the N-terminus, the 432-residue chain is Enolase (432 aa).

Glutamine 167 serves as a coordination point for (2R)-2-phosphoglycerate. Glutamate 209 acts as the Proton donor in catalysis. The Mg(2+) site is built by aspartate 246, glutamate 287, and aspartate 314. (2R)-2-phosphoglycerate-binding residues include lysine 339, arginine 368, serine 369, and lysine 390. The active-site Proton acceptor is the lysine 339.

Belongs to the enolase family. Mg(2+) serves as cofactor.

It localises to the cytoplasm. Its subcellular location is the secreted. The protein localises to the cell surface. The catalysed reaction is (2R)-2-phosphoglycerate = phosphoenolpyruvate + H2O. The protein operates within carbohydrate degradation; glycolysis; pyruvate from D-glyceraldehyde 3-phosphate: step 4/5. Its function is as follows. Catalyzes the reversible conversion of 2-phosphoglycerate (2-PG) into phosphoenolpyruvate (PEP). It is essential for the degradation of carbohydrates via glycolysis. This Prochlorococcus marinus (strain MIT 9211) protein is Enolase.